We begin with the raw amino-acid sequence, 145 residues long: Large ribosomal subunit protein uL13 (145 aa).

Belongs to the universal ribosomal protein uL13 family. In terms of assembly, part of the 50S ribosomal subunit.

This protein is one of the early assembly proteins of the 50S ribosomal subunit, although it is not seen to bind rRNA by itself. It is important during the early stages of 50S assembly. This Staphylococcus carnosus (strain TM300) protein is Large ribosomal subunit protein uL13.